A 193-amino-acid chain; its full sequence is Protein PATRONUS 1 (193 aa).

A DEN-box motif is present at residues 14–16 (DEN). Residues 46 to 49 (RKAL) carry the D-box motif.

Interacts directly with the anaphase promoting complex/cyclosome (APC/C) through the CDC27B and CDC20-1 subunits. Expressed in somatic and reproductive tissues. Expressed in inflorescence, young buds, roots and basal portion of young leaves. Expressed in proliferating cells such as apical meristems of roots and shoots, expanding cotyledons and leaves, root vascular tissues, and in stomatal precursor cells.

It is found in the nucleus. Its subcellular location is the cytoplasm. Functionally, required for the maintenance of centromeric cohesion during interkinesis, until meiosis II. Required for regular configuration and segregation of sister chromatids in meiosis II. Also required for centromere cohesion during meiosis I. Involved in spindle organization at the end of telophase I and in meiosis II. Required to prevent precocious release of pericentromeric cohesins during meiosis, but not for cohesion establishment and monopolar orientation of kinetochores at meiosis I. Involved also in somatic development. Regulates mitotic cell division and ploidy stability in somatic cell types. May be involved in the organization of microtubules dynamics. Involved in abiotic stresses and mono- or divalent ions tolerance and may play a role in maintaining meristematic activity under saline conditions. PANS1 and GIG1 are part of a network linking centromere cohesion and cell cycle progression through control of APC/C activity. Regulates the number of dividing cells in root meristem and is necessary for the anaphase onset control through an APC/C-mediated pathway. Involved in maintaining correct chromosome arm cohesion under stress conditions. In Arabidopsis thaliana (Mouse-ear cress), this protein is Protein PATRONUS 1.